A 454-amino-acid polypeptide reads, in one-letter code: Golgi reassembly-stacking protein 2 (454 aa).

A lipid anchor (N-myristoyl glycine) is attached at G2. PDZ GRASP-type domains follow at residues 15–105 (EGYH…FCSF) and 111–199 (NVWH…YGYL). The GRASP stretch occupies residues 15–215 (EGYHVLRVQE…PFEEGKKISL (201 aa)). 2 positions are modified to dimethylated arginine: R30 and R47. The tract at residues 194 to 199 (IGYGYL) is important for membrane binding. S214 bears the Phosphoserine mark. Position 222 is a phosphothreonine (T222). T225 carries the post-translational modification Phosphothreonine; by MAPK. Positions 377–454 (EGSSAASAGE…VTDANASGAS (78 aa)) are disordered. Phosphoserine is present on S411. T435 bears the Phosphothreonine mark. 2 positions are modified to phosphoserine: S443 and S451.

This sequence belongs to the GORASP family. In terms of assembly, homodimer. Homooligomer. ER stress induces phosphorylation-dependent monomerization. Interacts with BLZF1/Golgin 45. Identified in a complex with RAB2 and GORASP2. Interacts with JAM2 and JAM3. Interacts with members of the p24 cargo receptors. Interacts with CNIH1 and the cytoplasmic domain of transmembrane TGFA, prior its transit in the trans-Golgi. Interacts with KCTD5. Interacts with TMED2 and TMED3. Interacts with SEC16A in response to ER stress. Interacts (via PDZ GRASP-type 1 domain) with core-glycosylated CFTR in response to ER stress. Post-translationally, myristoylated. Myristoylation is essential for the Golgi targeting. In terms of processing, palmitoylated. Phosphorylated in mitotic cells. ER stress-induced phosphorylation at Ser-443 induces monomerization and subsequent relocalization from Golgi to ER which is essential for mediating unconventional (ER/Golgi-independent) trafficking of CFTR to the cell membrane. In terms of tissue distribution, detected in lung, brain, heart, liver and testis.

The protein resides in the golgi apparatus membrane. Its subcellular location is the endoplasmic reticulum membrane. The protein localises to the golgi apparatus. Its function is as follows. Key structural protein of the Golgi apparatus. The membrane cisternae of the Golgi apparatus adhere to each other to form stacks, which are aligned side by side to form the Golgi ribbon. Acting in concert with GORASP1/GRASP65, is required for the formation and maintenance of the Golgi ribbon, and may be dispensable for the formation of stacks. However, other studies suggest that GORASP2 plays a role in the assembly and membrane stacking of the Golgi cisternae, and in the process by which Golgi stacks reform after breakdown during mitosis and meiosis. May regulate the intracellular transport and presentation of a defined set of transmembrane proteins, such as transmembrane TGFA. Required for normal acrosome formation during spermiogenesis and normal male fertility, probably by promoting colocalization of JAM2 and JAM3 at contact sites between germ cells and Sertoli cells. Mediates ER stress-induced unconventional (ER/Golgi-independent) trafficking of core-glycosylated CFTR to cell membrane. In Rattus norvegicus (Rat), this protein is Golgi reassembly-stacking protein 2 (Gorasp2).